The primary structure comprises 345 residues: Phosphoribosylformylglycinamidine cyclo-ligase (345 aa).

Belongs to the AIR synthase family.

The protein localises to the cytoplasm. The enzyme catalyses 2-formamido-N(1)-(5-O-phospho-beta-D-ribosyl)acetamidine + ATP = 5-amino-1-(5-phospho-beta-D-ribosyl)imidazole + ADP + phosphate + H(+). It functions in the pathway purine metabolism; IMP biosynthesis via de novo pathway; 5-amino-1-(5-phospho-D-ribosyl)imidazole from N(2)-formyl-N(1)-(5-phospho-D-ribosyl)glycinamide: step 2/2. The sequence is that of Phosphoribosylformylglycinamidine cyclo-ligase from Cronobacter sakazakii (strain ATCC BAA-894) (Enterobacter sakazakii).